A 68-amino-acid chain; its full sequence is Large ribosomal subunit protein bL33c (68 aa).

Belongs to the bacterial ribosomal protein bL33 family.

It localises to the plastid. It is found in the chloroplast. The sequence is that of Large ribosomal subunit protein bL33c from Piper cenocladum (Ant piper).